Reading from the N-terminus, the 674-residue chain is Penicillin-binding protein activator LpoA (674 aa).

The first 31 residues, 1–31 (MLSSTFVRTKAGRSKPVRLTAVIAAALFLAG), serve as a signal peptide directing secretion. Residue Cys-32 is the site of N-palmitoyl cysteine attachment. Cys-32 carries S-diacylglycerol cysteine lipidation. The segment at 291–349 (GVTPSTPVQQQQPASVPEQAAQPASTDPNANGAVSTSAPDAAPVTAAQPSAPSTAPITP) is disordered. The span at 292–315 (VTPSTPVQQQQPASVPEQAAQPAS) shows a compositional bias: low complexity. Residues 316–328 (TDPNANGAVSTSA) are compositionally biased toward polar residues. Low complexity predominate over residues 331-349 (AAPVTAAQPSAPSTAPITP).

The protein belongs to the LpoA family. In terms of assembly, interacts with PBP1a.

It localises to the cell outer membrane. Its function is as follows. Regulator of peptidoglycan synthesis that is essential for the function of penicillin-binding protein 1A (PBP1a). This is Penicillin-binding protein activator LpoA from Serratia proteamaculans (strain 568).